The following is a 317-amino-acid chain: Glutaminase (317 aa).

Positions 67, 118, 162, 169, 193, 245, and 263 each coordinate substrate.

It belongs to the glutaminase family. In terms of assembly, homotetramer.

It carries out the reaction L-glutamine + H2O = L-glutamate + NH4(+). The chain is Glutaminase from Brucella abortus (strain S19).